Here is a 512-residue protein sequence, read N- to C-terminus: NADH-quinone oxidoreductase subunit N (512 aa).

A run of 14 helical transmembrane segments spans residues Val-32–Phe-52, Phe-57–Tyr-77, Val-97–Val-117, Ile-126–Thr-146, Phe-151–Met-171, Phe-186–Gly-206, Ile-231–Ala-251, Val-264–Tyr-284, Trp-296–Leu-316, Met-324–Ile-344, Val-348–Tyr-368, Ala-392–Trp-412, Ile-431–Gly-451, and Val-473–Leu-493.

It belongs to the complex I subunit 2 family. NDH-1 is composed of 14 different subunits. Subunits NuoA, H, J, K, L, M, N constitute the membrane sector of the complex.

It localises to the cell inner membrane. The enzyme catalyses a quinone + NADH + 5 H(+)(in) = a quinol + NAD(+) + 4 H(+)(out). Functionally, NDH-1 shuttles electrons from NADH, via FMN and iron-sulfur (Fe-S) centers, to quinones in the respiratory chain. The immediate electron acceptor for the enzyme in this species is believed to be ubiquinone. Couples the redox reaction to proton translocation (for every two electrons transferred, four hydrogen ions are translocated across the cytoplasmic membrane), and thus conserves the redox energy in a proton gradient. This chain is NADH-quinone oxidoreductase subunit N, found in Leptospira interrogans serogroup Icterohaemorrhagiae serovar Lai (strain 56601).